Here is a 41-residue protein sequence, read N- to C-terminus: Large ribosomal subunit protein bL36 (41 aa).

The protein belongs to the bacterial ribosomal protein bL36 family.

The chain is Large ribosomal subunit protein bL36 (rpmJ) from Agrobacterium fabrum (strain C58 / ATCC 33970) (Agrobacterium tumefaciens (strain C58)).